Here is a 397-residue protein sequence, read N- to C-terminus: uncharacterized protein (397 aa).

The tract at residues 368-391 is disordered; that stretch reads TTKPGLHQPTQKRPTQTTSKPYIN. Over residues 375-388 the composition is skewed to polar residues; sequence QPTQKRPTQTTSKP.

This is an uncharacterized protein from Acanthamoeba polyphaga mimivirus (APMV).